The sequence spans 351 residues: Methylthioribose-1-phosphate isomerase (351 aa).

Substrate is bound by residues 51-53 (RGA), R94, and Q199. Catalysis depends on D240, which acts as the Proton donor. Substrate is bound at residue 250–251 (NK).

The protein belongs to the EIF-2B alpha/beta/delta subunits family. MtnA subfamily. Homodimer.

The catalysed reaction is 5-(methylsulfanyl)-alpha-D-ribose 1-phosphate = 5-(methylsulfanyl)-D-ribulose 1-phosphate. The protein operates within amino-acid biosynthesis; L-methionine biosynthesis via salvage pathway; L-methionine from S-methyl-5-thio-alpha-D-ribose 1-phosphate: step 1/6. Its function is as follows. Catalyzes the interconversion of methylthioribose-1-phosphate (MTR-1-P) into methylthioribulose-1-phosphate (MTRu-1-P). The sequence is that of Methylthioribose-1-phosphate isomerase from Bacillus anthracis.